The sequence spans 295 residues: MVQKLRKKYKFKINTTSSRYYGSYNITRNWRILIRTNFQSLIEMDYSFIKKWHAIINDDKISFIMYTICKYVDFQKETDIFIKAYLELKKNCRPKYLEDLFSFDKNTIISIEKAKGDSPGNVGGFIINCRDPEEELFWNRIPRYESKNNNCLSFKFITQYNLIEKARGNYFLPKIFLEVLKKGPEEIDKEKRKTVLAKKIDNDEEIEKIEIKKEKQFEIKSFFEDSEFLAITEKYTKKCEDLININNKGKKIRDLFCNYILELLILEINILNSQSKPKYSDVFICTYKKKRTIMK.

The protein localises to the plastid. The protein resides in the chloroplast. This is an uncharacterized protein from Euglena gracilis.